The following is a 467-amino-acid chain: Putative serine/threonine-protein kinase R400 (467 aa).

The Protein kinase domain occupies 99–467 (GVKLIYIKSG…STGQKPTKKV (369 aa)). Residues 105 to 113 (IKSGTTGHT) and Lys129 contribute to the ATP site. Asp272 functions as the Proton acceptor in the catalytic mechanism. The segment at 443-467 (LFQQGNGSKQPVPKKSTGQKPTKKV) is disordered. Positions 458-467 (STGQKPTKKV) are enriched in polar residues.

Belongs to the protein kinase superfamily. Ser/Thr protein kinase family.

It is found in the virion. It catalyses the reaction L-seryl-[protein] + ATP = O-phospho-L-seryl-[protein] + ADP + H(+). It carries out the reaction L-threonyl-[protein] + ATP = O-phospho-L-threonyl-[protein] + ADP + H(+). This Acanthamoeba polyphaga mimivirus (APMV) protein is Putative serine/threonine-protein kinase R400.